The following is a 277-amino-acid chain: Energy-coupling factor transporter transmembrane protein EcfT (277 aa).

The next 6 helical transmembrane spans lie at 39-59 (ITILFIWAIFLANNPITYAII), 61-81 (FFCFLAIIATGLKARVFWNGV), 85-105 (IGLIFFTSLLQLFFMTGGHVF), 121-141 (AIYIFIRFTLIILISTVMTVT), 163-183 (VPVDEIALVISIALRFVPTLF), and 254-274 (SKYDLISLAYFILLVGLLLIF).

This sequence belongs to the energy-coupling factor EcfT family. In terms of assembly, forms a stable energy-coupling factor (ECF) transporter complex composed of 2 membrane-embedded substrate-binding proteins (S component), 2 ATP-binding proteins (A component) and 2 transmembrane proteins (T component). May be able to interact with more than 1 S component at a time.

The protein localises to the cell membrane. In terms of biological role, transmembrane (T) component of an energy-coupling factor (ECF) ABC-transporter complex. Unlike classic ABC transporters this ECF transporter provides the energy necessary to transport a number of different substrates. This Lactobacillus helveticus (strain DPC 4571) protein is Energy-coupling factor transporter transmembrane protein EcfT.